A 332-amino-acid polypeptide reads, in one-letter code: Holliday junction branch migration complex subunit RuvB (332 aa).

The interval 1–181 (MTRFLDSDAM…FGITGHMEYY (181 aa)) is large ATPase domain (RuvB-L). ATP contacts are provided by residues leucine 20, arginine 21, glycine 62, lysine 65, threonine 66, threonine 67, 128-130 (EDF), arginine 171, tyrosine 181, and arginine 218. Threonine 66 lines the Mg(2+) pocket. Positions 182–252 (EENDLTEIIE…ITDKALTMLD (71 aa)) are small ATPAse domain (RuvB-S). The head domain (RuvB-H) stretch occupies residues 255 to 332 (HEGLDYVDQK…EHLGYQRFDK (78 aa)). Residues arginine 291, arginine 310, arginine 312, and arginine 315 each contribute to the DNA site.

It belongs to the RuvB family. As to quaternary structure, homohexamer. Forms an RuvA(8)-RuvB(12)-Holliday junction (HJ) complex. HJ DNA is sandwiched between 2 RuvA tetramers; dsDNA enters through RuvA and exits via RuvB. An RuvB hexamer assembles on each DNA strand where it exits the tetramer. Each RuvB hexamer is contacted by two RuvA subunits (via domain III) on 2 adjacent RuvB subunits; this complex drives branch migration. In the full resolvosome a probable DNA-RuvA(4)-RuvB(12)-RuvC(2) complex forms which resolves the HJ.

It localises to the cytoplasm. The enzyme catalyses ATP + H2O = ADP + phosphate + H(+). Its function is as follows. The RuvA-RuvB-RuvC complex processes Holliday junction (HJ) DNA during genetic recombination and DNA repair, while the RuvA-RuvB complex plays an important role in the rescue of blocked DNA replication forks via replication fork reversal (RFR). RuvA specifically binds to HJ cruciform DNA, conferring on it an open structure. The RuvB hexamer acts as an ATP-dependent pump, pulling dsDNA into and through the RuvAB complex. RuvB forms 2 homohexamers on either side of HJ DNA bound by 1 or 2 RuvA tetramers; 4 subunits per hexamer contact DNA at a time. Coordinated motions by a converter formed by DNA-disengaged RuvB subunits stimulates ATP hydrolysis and nucleotide exchange. Immobilization of the converter enables RuvB to convert the ATP-contained energy into a lever motion, pulling 2 nucleotides of DNA out of the RuvA tetramer per ATP hydrolyzed, thus driving DNA branch migration. The RuvB motors rotate together with the DNA substrate, which together with the progressing nucleotide cycle form the mechanistic basis for DNA recombination by continuous HJ branch migration. Branch migration allows RuvC to scan DNA until it finds its consensus sequence, where it cleaves and resolves cruciform DNA. The protein is Holliday junction branch migration complex subunit RuvB of Streptococcus agalactiae serotype V (strain ATCC BAA-611 / 2603 V/R).